The chain runs to 659 residues: Threonine--tRNA ligase (659 aa).

Positions 1-60 constitute a TGS domain; it reads MTVYLPDGKPLELPEGATAKDVARALGEGWERRAVGAIVDGELYDLLKPLPQGAKVRLLT. Catalytic regions lie at residues 234–548 and 252–552; these read TAEE…EHFA and DHRR…GDFP. The Zn(2+) site is built by Cys349, His400, and His529.

Belongs to the class-II aminoacyl-tRNA synthetase family. Homodimer. Zn(2+) serves as cofactor.

Its subcellular location is the cytoplasm. The enzyme catalyses tRNA(Thr) + L-threonine + ATP = L-threonyl-tRNA(Thr) + AMP + diphosphate + H(+). Functionally, catalyzes the attachment of threonine to tRNA(Thr) in a two-step reaction: L-threonine is first activated by ATP to form Thr-AMP and then transferred to the acceptor end of tRNA(Thr). Also edits incorrectly charged L-seryl-tRNA(Thr). The sequence is that of Threonine--tRNA ligase from Thermus thermophilus (strain ATCC 27634 / DSM 579 / HB8).